Reading from the N-terminus, the 79-residue chain is Small ribosomal subunit protein uS17 (79 aa).

Belongs to the universal ribosomal protein uS17 family. As to quaternary structure, part of the 30S ribosomal subunit.

Functionally, one of the primary rRNA binding proteins, it binds specifically to the 5'-end of 16S ribosomal RNA. The protein is Small ribosomal subunit protein uS17 of Bartonella tribocorum (strain CIP 105476 / IBS 506).